Here is a 471-residue protein sequence, read N- to C-terminus: Putative multidrug resistance protein MdtD (471 aa).

The next 13 helical transmembrane spans lie at 12–32 (LWIV…VNTA), 49–69 (MIIV…GWLA), 77–97 (IFFT…QAST), 106–126 (VLQG…VMKI), 138–158 (FVTL…GVLV), 165–185 (WIFL…LCLM), 195–215 (FDLS…LALD), 220–240 (LGIS…ALLL), 263–283 (FSLG…LPFM), 286–306 (VFLQ…MIPM), 342–362 (LLFM…VLFL), 393–413 (LLSM…GLLL), and 431–451 (VFLY…LIFS).

The protein belongs to the major facilitator superfamily. TCR/Tet family.

It localises to the cell inner membrane. This Klebsiella pneumoniae (strain 342) protein is Putative multidrug resistance protein MdtD.